The following is a 526-amino-acid chain: Keratin, type I cytoskeletal 10 (526 aa).

Low complexity predominate over residues 1-16 (MSVRFSSNSRQYSSAR). A disordered region spans residues 1–40 (MSVRFSSNSRQYSSARSGGGGGGGGGGSSIRVSSTKSSLG). The head stretch occupies residues 1–144 (MSVRFSSNSR…GDGGGLLSGN (144 aa)). Phosphoserine occurs at positions 17, 38, 49, 52, and 169. Residues 17–28 (SGGGGGGGGGGS) show a composition bias toward gly residues. The tract at residues 145 to 180 (EKVTMQNLNDRLASYMNKVRDLEESNYELEGKIKEW) is coil 1A. The IF rod domain occupies 145-459 (EKVTMQNLND…SLLEGEGGYV (315 aa)). The segment at 181–201 (YEKHGNSSQREPRDYSKYYKT) is linker 1. A coil 1B region spans residues 202–293 (IEDLKGQIVN…KNHEEEMKDL (92 aa)). Positions 294 to 316 (QNVSTGDVNVEMNAAPGVDLTQL) are linker 12. The interval 317-455 (LNNMRNQYEQ…QTYRSLLEGE (139 aa)) is coil 2. Positions 456–526 (GGYVGNLQIT…IESETKKHFY (71 aa)) are tail.

This sequence belongs to the intermediate filament family. In terms of assembly, heterotetramer of two type I and two type II keratins. Heterodimer with KRT1. Two heterodimers of KRT1 and KRT10 form a heterotetramer. The KRT10 subunit in the heterotetramer is probably disulfide-linked.

Its subcellular location is the secreted. It is found in the extracellular space. It localises to the cell surface. The protein resides in the cytoplasm. Plays a role in the establishment of the epidermal barrier on plantar skin. Involved in the maintenance of cell layer development and keratin filament bundles in suprabasal cells of the epithelium. In Rattus norvegicus (Rat), this protein is Keratin, type I cytoskeletal 10.